Consider the following 318-residue polypeptide: Acetyl-coenzyme A carboxylase carboxyl transferase subunit alpha (318 aa).

In terms of domain architecture, CoA carboxyltransferase C-terminal spans 36–293 (EIDRLKEKST…KTRLSEQLDQ (258 aa)).

It belongs to the AccA family. As to quaternary structure, acetyl-CoA carboxylase is a heterohexamer composed of biotin carboxyl carrier protein (AccB), biotin carboxylase (AccC) and two subunits each of ACCase subunit alpha (AccA) and ACCase subunit beta (AccD).

It localises to the cytoplasm. The catalysed reaction is N(6)-carboxybiotinyl-L-lysyl-[protein] + acetyl-CoA = N(6)-biotinyl-L-lysyl-[protein] + malonyl-CoA. The protein operates within lipid metabolism; malonyl-CoA biosynthesis; malonyl-CoA from acetyl-CoA: step 1/1. Component of the acetyl coenzyme A carboxylase (ACC) complex. First, biotin carboxylase catalyzes the carboxylation of biotin on its carrier protein (BCCP) and then the CO(2) group is transferred by the carboxyltransferase to acetyl-CoA to form malonyl-CoA. The polypeptide is Acetyl-coenzyme A carboxylase carboxyl transferase subunit alpha (Teredinibacter turnerae (strain ATCC 39867 / T7901)).